Reading from the N-terminus, the 570-residue chain is Sulfite reductase [NADPH] hemoprotein beta-component (570 aa).

Positions 434, 440, 479, and 483 each coordinate [4Fe-4S] cluster. Cys-483 serves as a coordination point for siroheme.

The protein belongs to the nitrite and sulfite reductase 4Fe-4S domain family. In terms of assembly, alpha(8)-beta(8). The alpha component is a flavoprotein, the beta component is a hemoprotein. Siroheme is required as a cofactor. [4Fe-4S] cluster serves as cofactor.

The catalysed reaction is hydrogen sulfide + 3 NADP(+) + 3 H2O = sulfite + 3 NADPH + 4 H(+). It participates in sulfur metabolism; hydrogen sulfide biosynthesis; hydrogen sulfide from sulfite (NADPH route): step 1/1. Functionally, component of the sulfite reductase complex that catalyzes the 6-electron reduction of sulfite to sulfide. This is one of several activities required for the biosynthesis of L-cysteine from sulfate. This is Sulfite reductase [NADPH] hemoprotein beta-component from Escherichia coli (strain ATCC 8739 / DSM 1576 / NBRC 3972 / NCIMB 8545 / WDCM 00012 / Crooks).